The primary structure comprises 335 residues: Large ribosomal subunit protein uL10 (335 aa).

Positions 304 to 335 are disordered; sequence GAAAPVEEAPVEEKKEEKKEEAAAPAGLGMLF. Over residues 314–325 the composition is skewed to basic and acidic residues; the sequence is VEEKKEEKKEEA.

The protein belongs to the universal ribosomal protein uL10 family. As to quaternary structure, part of the 50S ribosomal subunit. Homodimer, it forms part of the ribosomal stalk which helps the ribosome interact with GTP-bound translation factors. Forms both a pentameric L10(L12)2(L12)2 and heptameric L10(L12)2(L12)2(L12)2 complex, where L10 forms an elongated spine to which the L12 dimers bind in a sequential fashion. The proportion of heptameric complexes increases during cell growth.

Functionally, forms part of the ribosomal stalk, playing a central role in the interaction of the ribosome with GTP-bound translation factors. In Methanococcus maripaludis (strain DSM 14266 / JCM 13030 / NBRC 101832 / S2 / LL), this protein is Large ribosomal subunit protein uL10.